Consider the following 553-residue polypeptide: Dihydroxy-acid dehydratase (553 aa).

Asp-78 is a Mg(2+) binding site. Cys-119 contributes to the [2Fe-2S] cluster binding site. Mg(2+)-binding residues include Asp-120 and Lys-121. N6-carboxylysine is present on Lys-121. Cys-193 contributes to the [2Fe-2S] cluster binding site. Glu-441 is a binding site for Mg(2+). Ser-467 acts as the Proton acceptor in catalysis.

The protein belongs to the IlvD/Edd family. In terms of assembly, homodimer. Requires [2Fe-2S] cluster as cofactor. Mg(2+) serves as cofactor.

It catalyses the reaction (2R)-2,3-dihydroxy-3-methylbutanoate = 3-methyl-2-oxobutanoate + H2O. The catalysed reaction is (2R,3R)-2,3-dihydroxy-3-methylpentanoate = (S)-3-methyl-2-oxopentanoate + H2O. The protein operates within amino-acid biosynthesis; L-isoleucine biosynthesis; L-isoleucine from 2-oxobutanoate: step 3/4. It participates in amino-acid biosynthesis; L-valine biosynthesis; L-valine from pyruvate: step 3/4. In terms of biological role, functions in the biosynthesis of branched-chain amino acids. Catalyzes the dehydration of (2R,3R)-2,3-dihydroxy-3-methylpentanoate (2,3-dihydroxy-3-methylvalerate) into 2-oxo-3-methylpentanoate (2-oxo-3-methylvalerate) and of (2R)-2,3-dihydroxy-3-methylbutanoate (2,3-dihydroxyisovalerate) into 2-oxo-3-methylbutanoate (2-oxoisovalerate), the penultimate precursor to L-isoleucine and L-valine, respectively. This chain is Dihydroxy-acid dehydratase, found in Geobacter sp. (strain M21).